The chain runs to 518 residues: MRKINFFDTTLRDGEQSPGVNLNTQEKLAIAQQLEKLGVNIMEAGFPASSPGDFNAVKEIARTIKNCSVTGLARSVKGDIDSAWEALKDGAEPRLHIFIATSDIHLKYKLKKTREQVLEQAVAMVKYAKERFPIVQWSAEDACRTDLPFLAEIVSEVIAAGADVVNLPDTVGYLAPAEYGNIFRYIKENARNADKVQLSAHCHDDLGMAVANSLAAIENGADQVESVINGIGERAGNASLEEIAVALHIRKDFYQAESTIQLNEIKRTSDLVSKLTGMAVPRNKAVVGDNAFAHESGIHQDGFLKEKTTYEIISPELVGVKTDALVLGKHSGRHAFKDKLQNLGFQLGEEEINKFFNIFKELTGKKKEFTDEDLISLILEEKTADRKIGYDFISLQVHYGTSQVPTATVSLKDQETDQVIQEAATGAGSVEAVYNTLKRCMDKEVQLLDYRIQSNRKGQDAFAQVYVRVMIDGKESGGRGVAQDVLEASAKAYLNAVNRYLVLKTNTEGLSKQAAVGS.

In terms of domain architecture, Pyruvate carboxyltransferase spans 4–266; it reads INFFDTTLRD…ESTIQLNEIK (263 aa). Mn(2+) is bound by residues Asp-13, His-201, His-203, and Asn-237. The segment at 391–518 is regulatory domain; the sequence is DFISLQVHYG…GLSKQAAVGS (128 aa).

This sequence belongs to the alpha-IPM synthase/homocitrate synthase family. LeuA type 1 subfamily. As to quaternary structure, homodimer. The cofactor is Mn(2+).

It localises to the cytoplasm. The catalysed reaction is 3-methyl-2-oxobutanoate + acetyl-CoA + H2O = (2S)-2-isopropylmalate + CoA + H(+). It participates in amino-acid biosynthesis; L-leucine biosynthesis; L-leucine from 3-methyl-2-oxobutanoate: step 1/4. Catalyzes the condensation of the acetyl group of acetyl-CoA with 3-methyl-2-oxobutanoate (2-ketoisovalerate) to form 3-carboxy-3-hydroxy-4-methylpentanoate (2-isopropylmalate). The sequence is that of 2-isopropylmalate synthase from Bacillus licheniformis (strain ATCC 14580 / DSM 13 / JCM 2505 / CCUG 7422 / NBRC 12200 / NCIMB 9375 / NCTC 10341 / NRRL NRS-1264 / Gibson 46).